The following is a 680-amino-acid chain: DNA-directed RNA polymerase subunit beta' (680 aa).

Residues Cys69, Cys71, Cys87, and Cys90 each coordinate Zn(2+). Residues Asp489, Asp491, and Asp493 each contribute to the Mg(2+) site.

This sequence belongs to the RNA polymerase beta' chain family. RpoC1 subfamily. In terms of assembly, in plastids the minimal PEP RNA polymerase catalytic core is composed of four subunits: alpha, beta, beta', and beta''. When a (nuclear-encoded) sigma factor is associated with the core the holoenzyme is formed, which can initiate transcription. Requires Mg(2+) as cofactor. Zn(2+) is required as a cofactor.

The protein resides in the plastid. The protein localises to the chloroplast. The catalysed reaction is RNA(n) + a ribonucleoside 5'-triphosphate = RNA(n+1) + diphosphate. In terms of biological role, DNA-dependent RNA polymerase catalyzes the transcription of DNA into RNA using the four ribonucleoside triphosphates as substrates. The polypeptide is DNA-directed RNA polymerase subunit beta' (Amborella trichopoda).